A 634-amino-acid chain; its full sequence is Calcium up-regulated protein D (634 aa).

The tract at residues 1-23 is disordered; sequence MINIEDISKSSNQSEEKQLKSTS. Ricin B-type lectin domains follow at residues 27 to 146 and 117 to 250; these read KPKY…WTTF and PGNG…WGIN.

This sequence belongs to the cup family.

It localises to the cytoplasm. Its subcellular location is the membrane. In terms of biological role, may play an important role in stabilizing and/or regulating the cell membrane during Ca(2+) stress or certain stages of development. This Dictyostelium discoideum (Social amoeba) protein is Calcium up-regulated protein D (cupD).